The following is a 554-amino-acid chain: Kinesin-like protein 3 (554 aa).

A Kinesin motor domain is found at 3-325; that stretch reads SIKVVCRIRP…LRFGHRAKSI (323 aa). ATP-binding positions include 84–91 and 233–240; these read GQTGSGKT and GSESVGKS. Positions 446–473 form a coiled coil; sequence LSSTKQQLSDLMTALGDAQERYVELVKN.

The protein belongs to the TRAFAC class myosin-kinesin ATPase superfamily. Kinesin family.

It localises to the cytoplasm. The protein resides in the cytoskeleton. Cytoplasmic motor that could play a role in Golgi membrane recycling. The polypeptide is Kinesin-like protein 3 (klp3) (Schizosaccharomyces pombe (strain 972 / ATCC 24843) (Fission yeast)).